Here is a 1040-residue protein sequence, read N- to C-terminus: Putative protein tag-76 (1040 aa).

The segment covering M1–L15 has biased composition (polar residues). Disordered regions lie at residues M1 to S61 and R322 to N367. Positions T16–S32 are enriched in low complexity. The segment covering R33 to P50 has biased composition (polar residues). Over residues G333–G356 the composition is skewed to gly residues. The PAZ domain maps to F379–S486. The 307-residue stretch at C660–K966 folds into the Piwi domain.

This chain is Putative protein tag-76 (tag-76), found in Caenorhabditis elegans.